We begin with the raw amino-acid sequence, 135 residues long: Regulator of ribonuclease activity B (135 aa).

The interval 114–135 (WGTYFESDEDDEEDESEDKPEA) is disordered. Residues 119–135 (ESDEDDEEDESEDKPEA) show a composition bias toward acidic residues.

The protein belongs to the RraB family. As to quaternary structure, interacts with the C-terminal region of Rne.

It localises to the cytoplasm. In terms of biological role, globally modulates RNA abundance by binding to RNase E (Rne) and regulating its endonucleolytic activity. Can modulate Rne action in a substrate-dependent manner by altering the composition of the degradosome. In Photobacterium profundum (strain SS9), this protein is Regulator of ribonuclease activity B.